The following is a 176-amino-acid chain: Inorganic pyrophosphatase (176 aa).

Residues lysine 30, arginine 44, and tyrosine 56 each coordinate substrate. Mg(2+) contacts are provided by aspartate 66, aspartate 71, and aspartate 103. Tyrosine 142 serves as a coordination point for substrate.

Belongs to the PPase family. In terms of assembly, homohexamer. The cofactor is Mg(2+).

Its subcellular location is the cytoplasm. It catalyses the reaction diphosphate + H2O = 2 phosphate + H(+). In terms of biological role, catalyzes the hydrolysis of inorganic pyrophosphate (PPi) forming two phosphate ions. The protein is Inorganic pyrophosphatase of Escherichia coli O157:H7.